The chain runs to 337 residues: uncharacterized protein (337 aa).

The next 2 helical transmembrane spans lie at 4–24 and 26–46; these read FIFF…FSLI and LLLW…LFAL.

The protein belongs to the plectrovirus ORF2 family.

It is found in the host membrane. This is an uncharacterized protein from Spiroplasma melliferum (SpV1).